Consider the following 199-residue polypeptide: Protein GrpE (199 aa).

The disordered stretch occupies residues 1–40; sequence MEKKKHGTNSISEALKVKAAVEQETATPEPTPQSETESAD. Polar residues predominate over residues 24-36; sequence ETATPEPTPQSET.

It belongs to the GrpE family. Homodimer.

The protein resides in the cytoplasm. Its function is as follows. Participates actively in the response to hyperosmotic and heat shock by preventing the aggregation of stress-denatured proteins, in association with DnaK and GrpE. It is the nucleotide exchange factor for DnaK and may function as a thermosensor. Unfolded proteins bind initially to DnaJ; upon interaction with the DnaJ-bound protein, DnaK hydrolyzes its bound ATP, resulting in the formation of a stable complex. GrpE releases ADP from DnaK; ATP binding to DnaK triggers the release of the substrate protein, thus completing the reaction cycle. Several rounds of ATP-dependent interactions between DnaJ, DnaK and GrpE are required for fully efficient folding. The protein is Protein GrpE of Geotalea uraniireducens (strain Rf4) (Geobacter uraniireducens).